The primary structure comprises 119 residues: Large ribosomal subunit protein bL20 (119 aa).

Belongs to the bacterial ribosomal protein bL20 family.

Functionally, binds directly to 23S ribosomal RNA and is necessary for the in vitro assembly process of the 50S ribosomal subunit. It is not involved in the protein synthesizing functions of that subunit. This chain is Large ribosomal subunit protein bL20, found in Herminiimonas arsenicoxydans.